The primary structure comprises 484 residues: UDP-N-acetylmuramoyl-L-alanyl-D-glutamate--2,6-diaminopimelate ligase (484 aa).

110–116 contacts ATP; that stretch reads GTNGKTT. Residues 152 to 153, Ser179, and Arg187 each bind UDP-N-acetyl-alpha-D-muramoyl-L-alanyl-D-glutamate; that span reads TT. N6-carboxylysine is present on Lys219. Meso-2,6-diaminopimelate-binding positions include Arg381, 405–408, Gly455, and Glu459; that span reads DNPR. A Meso-diaminopimelate recognition motif motif is present at residues 405–408; it reads DNPR.

The protein belongs to the MurCDEF family. MurE subfamily. It depends on Mg(2+) as a cofactor. Post-translationally, carboxylation is probably crucial for Mg(2+) binding and, consequently, for the gamma-phosphate positioning of ATP.

The protein resides in the cytoplasm. The catalysed reaction is UDP-N-acetyl-alpha-D-muramoyl-L-alanyl-D-glutamate + meso-2,6-diaminopimelate + ATP = UDP-N-acetyl-alpha-D-muramoyl-L-alanyl-gamma-D-glutamyl-meso-2,6-diaminopimelate + ADP + phosphate + H(+). The protein operates within cell wall biogenesis; peptidoglycan biosynthesis. In terms of biological role, catalyzes the addition of meso-diaminopimelic acid to the nucleotide precursor UDP-N-acetylmuramoyl-L-alanyl-D-glutamate (UMAG) in the biosynthesis of bacterial cell-wall peptidoglycan. This Clostridium perfringens (strain 13 / Type A) protein is UDP-N-acetylmuramoyl-L-alanyl-D-glutamate--2,6-diaminopimelate ligase.